The chain runs to 157 residues: Thiocyanate hydrolase subunit beta (157 aa).

In terms of assembly, heterododecamer consisting of 4 alpha, 4 beta, and 4 gamma subunits.

It carries out the reaction thiocyanate + H2O + 2 H(+) = carbonyl sulfide + NH4(+). Its pathway is organosulfur degradation; thiocyanate degradation. Functionally, involved in the degradation of thiocyanate. This Thiobacillus thioparus protein is Thiocyanate hydrolase subunit beta (scnB).